A 203-amino-acid polypeptide reads, in one-letter code: High-molecular weight cobalt-containing nitrile hydratase subunit alpha (203 aa).

Co(3+) is bound by residues Cys102, Cys105, Ser106, and Cys107.

This sequence belongs to the nitrile hydratase subunit alpha family. Heterodimer of an alpha and a beta chain. Co(3+) serves as cofactor.

It carries out the reaction an aliphatic primary amide = an aliphatic nitrile + H2O. NHase catalyzes the hydration of various nitrile compounds to the corresponding amides. This Rhodococcus rhodochrous protein is High-molecular weight cobalt-containing nitrile hydratase subunit alpha (nhhA).